An 83-amino-acid polypeptide reads, in one-letter code: Mu-theraphotoxin-Hhn2j 2 (83 aa).

The signal sequence occupies residues 1–21; sequence MKASMFLALAGLVLLFVVGYA. Residues 22-48 constitute a propeptide that is removed on maturation; it reads SESEEKEFPIELLSKIFAVDVFKGEDR. Cystine bridges form between cysteine 50–cysteine 65, cysteine 57–cysteine 70, and cysteine 64–cysteine 77. Leucine amide is present on leucine 81.

It belongs to the neurotoxin 10 (Hwtx-1) family. 15 (Hntx-3) subfamily. In terms of assembly, monomer. As to expression, expressed by the venom gland.

Its subcellular location is the secreted. Its function is as follows. Lethal neurotoxin. Selectively blocks tetrodotoxin-sensitive voltage-gated sodium channels (Nav). Does not affect tetrodotoxin-resistant voltage-gated sodium channels or calcium channels. In Cyriopagopus hainanus (Chinese bird spider), this protein is Mu-theraphotoxin-Hhn2j 2.